The sequence spans 106 residues: Small ribosomal subunit protein uS10 (106 aa).

It belongs to the universal ribosomal protein uS10 family. In terms of assembly, part of the 30S ribosomal subunit.

Functionally, involved in the binding of tRNA to the ribosomes. The protein is Small ribosomal subunit protein uS10 of Prochlorococcus marinus (strain MIT 9303).